The primary structure comprises 122 residues: Small ribosomal subunit protein uS13 (122 aa).

The tract at residues 95–122 (SLPVRGQRTHTNARTRKGPAKSIAGKKK) is disordered.

It belongs to the universal ribosomal protein uS13 family. Part of the 30S ribosomal subunit. Forms a loose heterodimer with protein S19. Forms two bridges to the 50S subunit in the 70S ribosome.

In terms of biological role, located at the top of the head of the 30S subunit, it contacts several helices of the 16S rRNA. In the 70S ribosome it contacts the 23S rRNA (bridge B1a) and protein L5 of the 50S subunit (bridge B1b), connecting the 2 subunits; these bridges are implicated in subunit movement. Contacts the tRNAs in the A and P-sites. The sequence is that of Small ribosomal subunit protein uS13 from Mesorhizobium japonicum (strain LMG 29417 / CECT 9101 / MAFF 303099) (Mesorhizobium loti (strain MAFF 303099)).